Here is a 353-residue protein sequence, read N- to C-terminus: Thiamine-phosphate synthase (353 aa).

The interval 1–128 (MELMVVEADA…ASTAAEIRYG (128 aa)) is unknown. Residues 129–353 (LYDLEVRILE…ASRTLLQTLA (225 aa)) form a thiamine-phosphate synthase region. 4-amino-2-methyl-5-(diphosphooxymethyl)pyrimidine is bound by residues 185-189 (QYRRK) and N217. Mg(2+) is bound by residues D218 and D237. Position 256 (S256) interacts with 4-amino-2-methyl-5-(diphosphooxymethyl)pyrimidine. 282–284 (TKT) is a 2-[(2R,5Z)-2-carboxy-4-methylthiazol-5(2H)-ylidene]ethyl phosphate binding site. Residue K285 participates in 4-amino-2-methyl-5-(diphosphooxymethyl)pyrimidine binding. G312 is a binding site for 2-[(2R,5Z)-2-carboxy-4-methylthiazol-5(2H)-ylidene]ethyl phosphate.

Belongs to the thiamine-phosphate synthase family. Mg(2+) is required as a cofactor.

The enzyme catalyses 2-[(2R,5Z)-2-carboxy-4-methylthiazol-5(2H)-ylidene]ethyl phosphate + 4-amino-2-methyl-5-(diphosphooxymethyl)pyrimidine + 2 H(+) = thiamine phosphate + CO2 + diphosphate. The catalysed reaction is 2-(2-carboxy-4-methylthiazol-5-yl)ethyl phosphate + 4-amino-2-methyl-5-(diphosphooxymethyl)pyrimidine + 2 H(+) = thiamine phosphate + CO2 + diphosphate. It catalyses the reaction 4-methyl-5-(2-phosphooxyethyl)-thiazole + 4-amino-2-methyl-5-(diphosphooxymethyl)pyrimidine + H(+) = thiamine phosphate + diphosphate. The protein operates within cofactor biosynthesis; thiamine diphosphate biosynthesis; thiamine phosphate from 4-amino-2-methyl-5-diphosphomethylpyrimidine and 4-methyl-5-(2-phosphoethyl)-thiazole: step 1/1. Its function is as follows. Condenses 4-methyl-5-(beta-hydroxyethyl)thiazole monophosphate (THZ-P) and 2-methyl-4-amino-5-hydroxymethyl pyrimidine pyrophosphate (HMP-PP) to form thiamine monophosphate (TMP). This chain is Thiamine-phosphate synthase, found in Synechococcus sp. (strain CC9311).